The primary structure comprises 213 residues: Large ribosomal subunit protein uL3 (213 aa).

Gln151 is modified (N5-methylglutamine).

The protein belongs to the universal ribosomal protein uL3 family. Part of the 50S ribosomal subunit. Forms a cluster with proteins L14 and L19. Post-translationally, methylated by PrmB.

Functionally, one of the primary rRNA binding proteins, it binds directly near the 3'-end of the 23S rRNA, where it nucleates assembly of the 50S subunit. The chain is Large ribosomal subunit protein uL3 from Rhizobium leguminosarum bv. trifolii (strain WSM2304).